The sequence spans 98 residues: NADH-ubiquinone oxidoreductase chain 4L (98 aa).

2 helical membrane-spanning segments follow: residues 1 to 21 (MTLIHFSFCSAFILGLTGLAL) and 48 to 68 (PLHLTIYLSSMMLYIMLPFAA).

The protein belongs to the complex I subunit 4L family. Core subunit of respiratory chain NADH dehydrogenase (Complex I) which is composed of 45 different subunits.

The protein resides in the mitochondrion inner membrane. It carries out the reaction a ubiquinone + NADH + 5 H(+)(in) = a ubiquinol + NAD(+) + 4 H(+)(out). Functionally, core subunit of the mitochondrial membrane respiratory chain NADH dehydrogenase (Complex I) which catalyzes electron transfer from NADH through the respiratory chain, using ubiquinone as an electron acceptor. Part of the enzyme membrane arm which is embedded in the lipid bilayer and involved in proton translocation. This is NADH-ubiquinone oxidoreductase chain 4L (mt-nd4l) from Xenopus laevis (African clawed frog).